The sequence spans 320 residues: Cytosolic Fe-S cluster assembly factor NUBP1 (320 aa).

Position 1 is an N-acetylmethionine (methionine 1). Residues cysteine 8, cysteine 22, cysteine 25, and cysteine 31 each coordinate [4Fe-4S] cluster. Residue 62–69 (GKGGVGKS) participates in ATP binding. The [4Fe-4S] cluster site is built by cysteine 235 and cysteine 238. Serine 319 carries the post-translational modification Phosphoserine.

This sequence belongs to the Mrp/NBP35 ATP-binding proteins family. NUBP1/NBP35 subfamily. As to quaternary structure, heterotetramer of 2 NUBP1 and 2 NUBP2 chains. Interacts with KIFC1. Interacts with the BBS/CCT complex subunit CCT1. It depends on [4Fe-4S] cluster as a cofactor.

It is found in the cytoplasm. The protein localises to the nucleus. The protein resides in the cell projection. It localises to the cytoskeleton. Its subcellular location is the cilium axoneme. It is found in the cilium basal body. The protein localises to the microtubule organizing center. The protein resides in the centrosome. It localises to the centriole. Its function is as follows. Component of the cytosolic iron-sulfur (Fe/S) protein assembly (CIA) machinery. Required for maturation of extramitochondrial Fe-S proteins. The NUBP1-NUBP2 heterotetramer forms a Fe-S scaffold complex, mediating the de novo assembly of an Fe-S cluster and its transfer to target apoproteins. Implicated in the regulation of centrosome duplication. Negatively regulates cilium formation and structure. This is Cytosolic Fe-S cluster assembly factor NUBP1 from Rattus norvegicus (Rat).